Here is a 421-residue protein sequence, read N- to C-terminus: PDZ and LIM domain protein 7 (421 aa).

Residues 1-85 (MEEYKVTLDG…KLGLVLSRFA (85 aa)) form the PDZ domain. Residues 115–193 (IARPFGSGTP…STGPAVRPPW (79 aa)) form a disordered region. A compositionally biased stretch (polar residues) spans 147–172 (YPSSQMPQGQLQNGQKSRTVSNVSGK). LIM zinc-binding domains are found at residues 244 to 302 (PVCS…ARFA), 303 to 362 (PNCA…MFGT), and 363 to 421 (KCRG…FSNV).

The protein localises to the cytoplasm. It is found in the cytoskeleton. In terms of biological role, may function as a scaffold on which the coordinated assembly of proteins can occur. May play a role as an adapter that, via its PDZ domain, localizes LIM-binding proteins to actin filaments of both skeletal muscle and nonmuscle tissues. The polypeptide is PDZ and LIM domain protein 7 (pdlim7) (Xenopus laevis (African clawed frog)).